Here is a 120-residue protein sequence, read N- to C-terminus: Nitrogenase-stabilizing/protective protein NifW (120 aa).

Belongs to the NifW family. Homotrimer; associates with NifD.

Functionally, may protect the nitrogenase Fe-Mo protein from oxidative damage. The protein is Nitrogenase-stabilizing/protective protein NifW of Rhodospirillum rubrum (strain ATCC 11170 / ATH 1.1.1 / DSM 467 / LMG 4362 / NCIMB 8255 / S1).